Reading from the N-terminus, the 2184-residue chain is Genome polyprotein (2184 aa).

A lipid anchor (N-myristoyl glycine; by host) is attached at G2. The Cytoplasmic segment spans residues 2-1494; it reads GAQVSTQKTG…HVSRAFICLQ (1493 aa). The tract at residues 567–583 is amphipathic alpha-helix; it reads FYQGDVQNAVEGAMVRV. Catalysis depends on for protease 2A activity residues H871 and D889. Positions 906 and 908 each coordinate Zn(2+). C960 functions as the For protease 2A activity in the catalytic mechanism. Zn(2+) is bound by residues C966 and H968. A membrane-binding region spans residues 1100–1172; it reads NNGWLKKFTE…EQSAPSQGDQ (73 aa). An oligomerization region spans residues 1100–1238; sequence NNGWLKKFTE…SPGAGKSVAT (139 aa). Residues 1121–1125 form an RNA-binding region; it reads AIKIQ. The SF3 helicase domain occupies 1204–1360; the sequence is EKKMSNYIQF…SMYSQNGKIN (157 aa). Zn(2+) contacts are provided by C1368, C1380, and C1385. The C4-type; degenerate zinc finger occupies 1368-1385; that stretch reads CDEDCCPVNFKKCCPLVC. The RNA-binding stretch occupies residues 1412-1419; it reads EYNHRHSV. Positions 1423 to 1428 are oligomerization; it reads LEALFQ. Residues 1495 to 1510 lie within the membrane without spanning it; that stretch reads ALTTFVSVAGIIYIIY. The Cytoplasmic segment spans residues 1511–2184; that stretch reads KLFAGFQGAY…TLRRKWLDSF (674 aa). An O-(5'-phospho-RNA)-tyrosine modification is found at Y1520. One can recognise a Peptidase C3 domain in the interval 1540-1718; sequence GPAFEFAVAM…FSAALLRHYF (179 aa). Catalysis depends on for protease 3C activity residues H1579, E1610, and C1686. The RdRp catalytic domain maps to 1949–2065; that stretch reads GHLIAFDYSG…SYPWPIDASL (117 aa). 2 residues coordinate Mg(2+): D1955 and D2051.

It belongs to the picornaviruses polyprotein family. Interacts with capsid protein VP1 and capsid protein VP3 to form heterotrimeric protomers. As to quaternary structure, interacts with capsid protein VP0, and capsid protein VP3 to form heterotrimeric protomers. Five protomers subsequently associate to form pentamers which serve as building blocks for the capsid. Interacts with capsid protein VP2, capsid protein VP3 and capsid protein VP4 following cleavage of capsid protein VP0. In terms of assembly, interacts with capsid protein VP1 and capsid protein VP3 in the mature capsid. Interacts with capsid protein VP0 and capsid protein VP1 to form heterotrimeric protomers. Five protomers subsequently associate to form pentamers which serve as building blocks for the capsid. Interacts with capsid protein VP4 in the mature capsid. Interacts with protein 2C; this interaction may be important for virion morphogenesis. As to quaternary structure, interacts with capsid protein VP1 and capsid protein VP3. In terms of assembly, homodimer. Homohexamer; forms a hexameric ring structure with 6-fold symmetry characteristic of AAA+ ATPases. Interacts (via N-terminus) with host RTN3 (via reticulon domain); this interaction is important for viral replication. Interacts with capsid protein VP3; this interaction may be important for virion morphogenesis. As to quaternary structure, interacts with protein 3CD. In terms of assembly, homodimer. Interacts with host GBF1. Interacts (via GOLD domain) with host ACBD3 (via GOLD domain); this interaction allows the formation of a viral protein 3A/ACBD3 heterotetramer with a 2:2 stoichiometry, which will stimulate the recruitment of host PI4KB in order to synthesize PI4P at the viral RNA replication sites. Interacts with RNA-directed RNA polymerase. As to quaternary structure, interacts with protein 3AB and with RNA-directed RNA polymerase. In terms of assembly, interacts with Viral protein genome-linked and with protein 3CD. Mg(2+) is required as a cofactor. Post-translationally, specific enzymatic cleavages in vivo by the viral proteases yield processing intermediates and the mature proteins. In terms of processing, myristoylation is required for the formation of pentamers during virus assembly. Further assembly of 12 pentamers and a molecule of genomic RNA generates the provirion. During virion maturation, immature virions are rendered infectious following cleavage of VP0 into VP4 and VP2. This maturation seems to be an autocatalytic event triggered by the presence of RNA in the capsid and it is followed by a conformational change infectious virion. Post-translationally, myristoylation is required during RNA encapsidation and formation of the mature virus particle. In terms of processing, VPg is uridylylated by the polymerase into VPg-pUpU. This acts as a nucleotide-peptide primer for the genomic RNA replication.

It localises to the virion. The protein localises to the host cytoplasm. The protein resides in the host cytoplasmic vesicle membrane. It is found in the host nucleus. The catalysed reaction is a ribonucleoside 5'-triphosphate + H2O = a ribonucleoside 5'-diphosphate + phosphate + H(+). It carries out the reaction Selective cleavage of Tyr-|-Gly bond in the picornavirus polyprotein.. It catalyses the reaction RNA(n) + a ribonucleoside 5'-triphosphate = RNA(n+1) + diphosphate. The enzyme catalyses Selective cleavage of Gln-|-Gly bond in the poliovirus polyprotein. In other picornavirus reactions Glu may be substituted for Gln, and Ser or Thr for Gly.. With respect to regulation, replication or transcription is subject to high level of random mutations by the nucleotide analog ribavirin. Its function is as follows. Forms an icosahedral capsid of pseudo T=3 symmetry with capsid proteins VP2 and VP3. The capsid is 300 Angstroms in diameter, composed of 60 copies of each capsid protein and enclosing the viral positive strand RNA genome. Capsid protein VP1 mainly forms the vertices of the capsid. Capsid protein VP1 interacts with host ITGA2/ITGB1 to provide virion attachment to target host cells. This attachment induces virion internalization predominantly through caveolin-mediated endocytosis. Tyrosine kinases are probably involved in the entry process. After binding to its receptor, the capsid undergoes conformational changes. Capsid protein VP1 N-terminus (that contains an amphipathic alpha-helix) and capsid protein VP4 are externalized. Together, they shape a pore in the host membrane through which viral genome is translocated to host cell cytoplasm. In terms of biological role, forms an icosahedral capsid of pseudo T=3 symmetry with capsid proteins VP2 and VP3. The capsid is 300 Angstroms in diameter, composed of 60 copies of each capsid protein and enclosing the viral positive strand RNA genome. Functionally, lies on the inner surface of the capsid shell. After binding to the host receptor, the capsid undergoes conformational changes. Capsid protein VP4 is released, Capsid protein VP1 N-terminus is externalized, and together, they shape a pore in the host membrane through which the viral genome is translocated into the host cell cytoplasm. Component of immature procapsids, which is cleaved into capsid proteins VP4 and VP2 after maturation. Allows the capsid to remain inactive before the maturation step. Its function is as follows. Cysteine protease that cleaves viral polyprotein and specific host proteins. It is responsible for the autocatalytic cleavage between the P1 and P2 regions, which is the first cleavage occurring in the polyprotein. Also cleaves the host translation initiation factor EIF4G1, in order to shut down the capped cellular mRNA translation. Inhibits the host nucleus-cytoplasm protein and RNA trafficking by cleaving host members of the nuclear pores. Counteracts stress granule formation probably by antagonizing its assembly or promoting its dissassembly. In terms of biological role, plays an essential role in the virus replication cycle by acting as a viroporin. Creates a pore in the host endoplasmic reticulum and as a consequence releases Ca2+ in the cytoplasm of infected cell. In turn, high levels of cytoplasmic calcium may trigger membrane trafficking and transport of viral ER-associated proteins to viroplasms, sites of viral genome replication. Functionally, induces and associates with structural rearrangements of intracellular membranes. Displays RNA-binding, nucleotide binding and NTPase activities. May play a role in virion morphogenesis and viral RNA encapsidation by interacting with the capsid protein VP3. Localizes the viral replication complex to the surface of membranous vesicles. Together with protein 3CD binds the Cis-Active RNA Element (CRE) which is involved in RNA synthesis initiation. Acts as a cofactor to stimulate the activity of 3D polymerase, maybe through a nucleid acid chaperone activity. Its function is as follows. Localizes the viral replication complex to the surface of membranous vesicles. It inhibits host cell endoplasmic reticulum-to-Golgi apparatus transport and causes the disassembly of the Golgi complex, possibly through GBF1 interaction. This would result in depletion of MHC, trail receptors and IFN receptors at the host cell surface. Plays an essential role in viral RNA replication by recruiting ACBD3 and PI4KB at the viral replication sites, thereby allowing the formation of the rearranged membranous structures where viral replication takes place. In terms of biological role, acts as a primer for viral RNA replication and remains covalently bound to viral genomic RNA. VPg is uridylylated prior to priming replication into VPg-pUpU. The oriI viral genomic sequence may act as a template for this. The VPg-pUpU is then used as primer on the genomic RNA poly(A) by the RNA-dependent RNA polymerase to replicate the viral genome. During genome replication, the VPg-RNA linkage is removed by the host TDP2, thereby accelerating replication. During the late stage of the replication cycle, host TDP2 is excluded from sites of viral RNA synthesis and encapsidation, allowing for the generation of progeny virions. Functionally, involved in the viral replication complex and viral polypeptide maturation. It exhibits protease activity with a specificity and catalytic efficiency that is different from protease 3C. Protein 3CD lacks polymerase activity. Protein 3CD binds to the 5'UTR of the viral genome. Replicates the viral genomic RNA on the surface of intracellular membranes. May form linear arrays of subunits that propagate along a strong head-to-tail interaction called interface-I. Covalently attaches UMP to a tyrosine of VPg, which is used to prime RNA synthesis. The positive stranded RNA genome is first replicated at virus induced membranous vesicles, creating a dsRNA genomic replication form. This dsRNA is then used as template to synthesize positive stranded RNA genomes. ss(+)RNA genomes are either translated, replicated or encapsidated. Its function is as follows. Major viral protease that mediates proteolytic processing of the polyprotein. Cleaves host EIF5B, contributing to host translation shutoff. Also cleaves host PABPC1, contributing to host translation shutoff. Cleaves host NLRP1, triggers host N-glycine-mediated degradation of the autoinhibitory NLRP1 N-terminal fragment. The sequence is that of Genome polyprotein from Homo sapiens (Human).